A 161-amino-acid polypeptide reads, in one-letter code: MSSSGAPSRKTLSKIATNRLQKELVEWQMNPPTGFKHKVTDNLQRWIIEVIGAPGTLYANDTYQLQVDFPEHYPMESPQVIFLHPAPLHPHIYSNGHICLDILYDSWSPAMTVSSICISILSMLSSSTEKQRPTDNDRYVKNCKNGRSPKETRWWFHDDKV.

One can recognise a UBC core domain in the interval 15-161 (IATNRLQKEL…TRWWFHDDKV (147 aa)). C99 functions as the Glycyl thioester intermediate in the catalytic mechanism.

It belongs to the ubiquitin-conjugating enzyme family.

It carries out the reaction S-ubiquitinyl-[E1 ubiquitin-activating enzyme]-L-cysteine + [E2 ubiquitin-conjugating enzyme]-L-cysteine = [E1 ubiquitin-activating enzyme]-L-cysteine + S-ubiquitinyl-[E2 ubiquitin-conjugating enzyme]-L-cysteine.. The protein operates within protein modification; protein ubiquitination. Accepts the ubiquitin from the E1 complex and catalyzes its covalent attachment to other proteins. This is Probable ubiquitin-conjugating enzyme E2 16 (UBC16) from Arabidopsis thaliana (Mouse-ear cress).